A 368-amino-acid polypeptide reads, in one-letter code: Somatostatin receptor type 5 (368 aa).

The Extracellular segment spans residues 1–45 (MEPLFPASPLTTWNTSSVVPSGSGDENGTLAGLGPSPGARAVVVP). 2 N-linked (GlcNAc...) asparagine glycosylation sites follow: Asn-14 and Asn-27. The chain crosses the membrane as a helical span at residues 46-66 (VLYLLVCAVGLGGNTLVIYVV). At 67 to 77 (LRHAKMKTVTN) the chain is on the cytoplasmic side. The helical transmembrane segment at 78 to 98 (IYILNLAVADVLLMLGLPFVA) threads the bilayer. Residues 99-115 (TQNAISYWPFGPVLCRL) are Extracellular-facing. Residues Cys-113 and Cys-188 are joined by a disulfide bond. Residues 116 to 136 (VMTLDGINQFTSIFCLTVMSV) form a helical membrane-spanning segment. Topologically, residues 137–158 (DRYLAVVHPIRSARWRRPRVAK) are cytoplasmic. A helical membrane pass occupies residues 159 to 179 (LASAAVWAFSLVMSLPLVVFA). Residues 180 to 207 (DIQEGWNTCNLSWPEPVGLWGAVFIIYT) lie on the Extracellular side of the membrane. An N-linked (GlcNAc...) asparagine glycan is attached at Asn-189. Residues 208–228 (SVLGFFGPLLVICLCYLLIVV) traverse the membrane as a helical segment. Topologically, residues 229-251 (KLKASGVRVGSTRRRSERKVTRM) are cytoplasmic. Residues 252 to 272 (VVVVVLVFAGCWLPFFIVNIV) form a helical membrane-spanning segment. Topologically, residues 273–286 (NLAFALPEEPASAG) are extracellular. A helical membrane pass occupies residues 287 to 309 (AYFFVVVLSYANSCANPLLYGFL). At 310–368 (SDNFRQSFRKVLCLRKGYGAGAEDADATEPQPGPSSRLQEAMMPVRSCKANGLMQTSKL) the chain is on the cytoplasmic side. The S-palmitoyl cysteine; by ZDHHC5 moiety is linked to residue Cys-322.

It belongs to the G-protein coupled receptor 1 family. As to quaternary structure, heterodimer with SSTR2. Heterodimerization with SSTR2 increases cell growth inhibition activity of SSTR2. Post-translationally, palmitoylated by ZDHHC5, but not ZDHHC3, nor ZDHHC8. Palmitoylation creates an additional intracellular loop which is thought to be important for efficient coupling to G-proteins and may target the protein to lipid rafts.

The protein resides in the cell membrane. Functionally, receptor for somatostatin 28 and to a lesser extent for somatostatin-14. The activity of this receptor is mediated by G proteins which inhibit adenylyl cyclase. Increases cell growth inhibition activity of SSTR2 following heterodimerization. The chain is Somatostatin receptor type 5 (SSTR5) from Bos taurus (Bovine).